The primary structure comprises 358 residues: GTPase Obg (358 aa).

An Obg domain is found at 1–158; sequence MFVDNVDIYV…RHVRLELKLI (158 aa). The OBG-type G domain occupies 159-355; the sequence is ADVGLVGFPN…LKYLLHESVR (197 aa). Residues 165–172, 190–194, 212–215, 280–283, and 336–338 each bind GTP; these read GFPNVGKS, FTTLI, DIPG, SKVD, and SSA. Mg(2+) is bound by residues serine 172 and threonine 192.

This sequence belongs to the TRAFAC class OBG-HflX-like GTPase superfamily. OBG GTPase family. Monomer. Mg(2+) is required as a cofactor.

It localises to the cytoplasm. Functionally, an essential GTPase which binds GTP, GDP and possibly (p)ppGpp with moderate affinity, with high nucleotide exchange rates and a fairly low GTP hydrolysis rate. Plays a role in control of the cell cycle, stress response, ribosome biogenesis and in those bacteria that undergo differentiation, in morphogenesis control. In Wolinella succinogenes (strain ATCC 29543 / DSM 1740 / CCUG 13145 / JCM 31913 / LMG 7466 / NCTC 11488 / FDC 602W) (Vibrio succinogenes), this protein is GTPase Obg.